The following is a 348-amino-acid chain: Arginine kinase Oct f 2 (348 aa).

In terms of domain architecture, Phosphagen kinase N-terminal spans 1 to 83 (MAEELFKTLQ…LDAVIMDYHK (83 aa)). 56 to 60 (GVGIY) provides a ligand contact to substrate. In terms of domain architecture, Phosphagen kinase C-terminal spans 111–347 (MIVSTRVRVG…NEIIREETNS (237 aa)). ATP contacts are provided by residues 114–118 (STRVR) and histidine 177. Glutamate 217 serves as a coordination point for substrate. Position 221 (arginine 221) interacts with ATP. Residue cysteine 263 participates in substrate binding. Residues 272–276 (RASVH) and 300–305 (RGIHGE) contribute to the ATP site. A substrate-binding site is contributed by glutamate 305.

It belongs to the ATP:guanido phosphotransferase family. In terms of tissue distribution, muscle (at protein level).

It catalyses the reaction L-arginine + ATP = N(omega)-phospho-L-arginine + ADP + H(+). Functionally, catalyzes the reversible transfer of high energy ATP gamma-phosphate group to L-arginine. The sequence is that of Arginine kinase Oct f 2 from Amphioctopus fangsiao (Ocellated octopus).